A 130-amino-acid chain; its full sequence is Small ribosomal subunit protein uS9 (130 aa).

This sequence belongs to the universal ribosomal protein uS9 family.

The chain is Small ribosomal subunit protein uS9 from Oceanobacillus iheyensis (strain DSM 14371 / CIP 107618 / JCM 11309 / KCTC 3954 / HTE831).